The chain runs to 380 residues: MAPNLRKSHPLLKMINNSLIDLPTPSNISAWWNFGSLLGICLMTQILTGLLLAMHYTADTTLAFSSIAHTCRNVQYGWLIRNLHANGASFFFICIYLHIGRGFYYGSYLNKETWNTGILLLLTLMATAFVGYVLPWGQMSFWGATVITNLFSAIPYIGQTLVEWAWGGFSVDNPTLTRFFALHFLLPFMIAGLTLIHLTFLHESGSNNPLGILSNCDKIPFHPYFTLKDILGFTLMFLPLTALALFSPTLLGDPENFTPANPLVTPPHIKPEWYFLFAYAILRSIPNKLGGVLALAASVLVLFLSPLLHKSKQRTLTFRPLSQLLFWLLVTNLFILTWIGSQPVEHPFIIIGQLASITYFTILLVLFPTIAALENKMLNY.

4 helical membrane-spanning segments follow: residues 34–54, 78–99, 114–134, and 179–199; these read FGSL…LLAM, WLIR…YLHI, WNTG…GYVL, and FFAL…IHLT. Heme b contacts are provided by histidine 84 and histidine 98. Heme b-binding residues include histidine 183 and histidine 197. Residue histidine 202 participates in a ubiquinone binding. The next 4 helical transmembrane spans lie at 227-247, 289-309, 321-341, and 348-368; these read LKDI…ALFS, LGGV…PLLH, LSQL…WIGS, and FIII…VLFP.

The protein belongs to the cytochrome b family. As to quaternary structure, the cytochrome bc1 complex contains 11 subunits: 3 respiratory subunits (MT-CYB, CYC1 and UQCRFS1), 2 core proteins (UQCRC1 and UQCRC2) and 6 low-molecular weight proteins (UQCRH/QCR6, UQCRB/QCR7, UQCRQ/QCR8, UQCR10/QCR9, UQCR11/QCR10 and a cleavage product of UQCRFS1). This cytochrome bc1 complex then forms a dimer. Heme b is required as a cofactor.

Its subcellular location is the mitochondrion inner membrane. Component of the ubiquinol-cytochrome c reductase complex (complex III or cytochrome b-c1 complex) that is part of the mitochondrial respiratory chain. The b-c1 complex mediates electron transfer from ubiquinol to cytochrome c. Contributes to the generation of a proton gradient across the mitochondrial membrane that is then used for ATP synthesis. The sequence is that of Cytochrome b (MT-CYB) from Thalassarche impavida (Albatross).